The chain runs to 269 residues: Eukaryotic translation initiation factor 3 subunit G-1 (269 aa).

Residues 188-266 enclose the RRM domain; that stretch reads AAIRISNLSE…LILSVEWSKP (79 aa).

The protein belongs to the eIF-3 subunit G family. In terms of assembly, component of the eukaryotic translation initiation factor 3 (eIF-3) complex. The eIF-3 complex interacts with pix.

It is found in the cytoplasm. RNA-binding component of the eukaryotic translation initiation factor 3 (eIF-3) complex, which is involved in protein synthesis of a specialized repertoire of mRNAs and, together with other initiation factors, stimulates binding of mRNA and methionyl-tRNAi to the 40S ribosome. The eIF-3 complex specifically targets and initiates translation of a subset of mRNAs involved in cell proliferation. This subunit can bind 18S rRNA. The chain is Eukaryotic translation initiation factor 3 subunit G-1 from Drosophila persimilis (Fruit fly).